A 556-amino-acid polypeptide reads, in one-letter code: Phenylalanine--tRNA ligase beta subunit (556 aa).

Residues L278 to P353 form the B5 domain. The Mg(2+) site is built by D331, D337, E340, and D341.

The protein belongs to the phenylalanyl-tRNA synthetase beta subunit family. Type 2 subfamily. As to quaternary structure, tetramer of two alpha and two beta subunits. It depends on Mg(2+) as a cofactor.

The protein localises to the cytoplasm. The catalysed reaction is tRNA(Phe) + L-phenylalanine + ATP = L-phenylalanyl-tRNA(Phe) + AMP + diphosphate + H(+). In Pyrococcus abyssi (strain GE5 / Orsay), this protein is Phenylalanine--tRNA ligase beta subunit.